The chain runs to 249 residues: Probable transcriptional regulatory protein MXAN_4974 (249 aa).

This sequence belongs to the TACO1 family.

It localises to the cytoplasm. In Myxococcus xanthus (strain DK1622), this protein is Probable transcriptional regulatory protein MXAN_4974.